Here is a 106-residue protein sequence, read N- to C-terminus: Large ribosomal subunit protein eL42 (106 aa).

This sequence belongs to the eukaryotic ribosomal protein eL42 family.

The protein is Large ribosomal subunit protein eL42 (RPL44) of Yarrowia lipolytica (strain CLIB 122 / E 150) (Yeast).